Here is a 365-residue protein sequence, read N- to C-terminus: tRNA/tmRNA (uracil-C(5))-methyltransferase (365 aa).

Positions 189, 217, 222, 238, and 298 each coordinate S-adenosyl-L-methionine. The active-site Nucleophile is the C323. Residue E357 is the Proton acceptor of the active site.

It belongs to the class I-like SAM-binding methyltransferase superfamily. RNA M5U methyltransferase family. TrmA subfamily.

It catalyses the reaction uridine(54) in tRNA + S-adenosyl-L-methionine = 5-methyluridine(54) in tRNA + S-adenosyl-L-homocysteine + H(+). The catalysed reaction is uridine(341) in tmRNA + S-adenosyl-L-methionine = 5-methyluridine(341) in tmRNA + S-adenosyl-L-homocysteine + H(+). Dual-specificity methyltransferase that catalyzes the formation of 5-methyluridine at position 54 (m5U54) in all tRNAs, and that of position 341 (m5U341) in tmRNA (transfer-mRNA). The sequence is that of tRNA/tmRNA (uracil-C(5))-methyltransferase from Saccharophagus degradans (strain 2-40 / ATCC 43961 / DSM 17024).